The sequence spans 250 residues: UPF0736 protein BLi01230/BL03322 (250 aa).

It belongs to the UPF0736 family.

This Bacillus licheniformis (strain ATCC 14580 / DSM 13 / JCM 2505 / CCUG 7422 / NBRC 12200 / NCIMB 9375 / NCTC 10341 / NRRL NRS-1264 / Gibson 46) protein is UPF0736 protein BLi01230/BL03322.